Reading from the N-terminus, the 486-residue chain is Hexokinase-2 (486 aa).

Position 15 is a phosphoserine (serine 15). A Hexokinase domain is found at 21–469; that stretch reads KELMQQIENF…SGAGAAVIAA (449 aa). Phosphothreonine is present on threonine 38. The hexokinase small subdomain stretch occupies residues 75-209; sequence TGKESGDFLA…NIPIEVVALI (135 aa). ATP contacts are provided by residues 86–91 and lysine 111; that span reads DLGGTN. Serine 158 bears the Phosphoserine mark. Residues serine 158, 175 to 176, 210 to 211, and asparagine 237 each bind substrate; these read TK and ND. The hexokinase large subdomain stretch occupies residues 210–458; that stretch reads NDTTGTLVAS…YPIKIVPAED (249 aa). Serine 245 is modified (phosphoserine). Residue glutamate 269 participates in substrate binding. Serine 272 bears the Phosphoserine mark. Glutamate 302 is a substrate binding site. Residues 307-308, 344-348, and 419-423 contribute to the ATP site; these read GY, TSYPA, and SVYNR.

This sequence belongs to the hexokinase family. In terms of assembly, homodimer.

The catalysed reaction is a D-hexose + ATP = a D-hexose 6-phosphate + ADP + H(+). The enzyme catalyses D-fructose + ATP = D-fructose 6-phosphate + ADP + H(+). It carries out the reaction D-glucose + ATP = D-glucose 6-phosphate + ADP + H(+). It functions in the pathway carbohydrate metabolism; hexose metabolism. It participates in carbohydrate degradation; glycolysis; D-glyceraldehyde 3-phosphate and glycerone phosphate from D-glucose: step 1/4. Its activity is regulated as follows. Subject to allosteric control. Substrate inhibition by ATP. Functionally, catalyzes the phosphorylation of hexose, such as D-glucose and D-fructose, to hexose 6-phosphate (D-glucose 6-phosphate and D-fructose 6-phosphate, respectively). Mediates the initial step of glycolysis by catalyzing phosphorylation of D-glucose to D-glucose 6-phosphate. In Saccharomyces cerevisiae (strain ATCC 204508 / S288c) (Baker's yeast), this protein is Hexokinase-2 (HXK2).